The sequence spans 417 residues: Phosphoglycerate kinase 2 (417 aa).

Ser2 is subject to N-acetylserine. Phosphoserine occurs at positions 2 and 4. Lys11 bears the N6-acetyllysine mark. Positions 23, 24, 25, 26, 38, and 39 each coordinate (2R)-3-phosphoglycerate. An N6-acetyllysine modification is found at Lys48. (2R)-3-phosphoglycerate is bound by residues Ser62, His63, Gly65, and Arg66. An N6-acetyllysine mark is found at Lys75, Lys86, and Lys97. Positions 122 and 123 each coordinate (2R)-3-phosphoglycerate. Lys131 and Lys146 each carry N6-acetyllysine. The (2R)-3-phosphoglycerate site is built by His170 and Arg171. Tyr196 carries the post-translational modification Phosphotyrosine. Residue Lys199 is modified to N6-acetyllysine. Residue Gly214 coordinates ADP. Gly214 contacts CDP. Ala215 and Lys216 together coordinate AMP. An ATP-binding site is contributed by Ala215. A Mg(2+)-binding site is contributed by Ala215. Positions 218 and 219 each coordinate Mg(2+). Asp219 contacts CDP. Lys220 contacts AMP. Lys220 is a binding site for ATP. Position 238 (Gly238) interacts with ADP. Gly238 serves as a coordination point for CDP. Position 239 (Gly239) interacts with AMP. Gly239 is an ATP binding site. N6-acetyllysine occurs at positions 267 and 291. An AMP-binding site is contributed by Gly313. Gly313 lines the ATP pocket. Positions 338 and 343 each coordinate CDP. Phe343 is a binding site for ADP. AMP is bound at residue Glu344. 3 residues coordinate ATP: Glu344, Asp375, and Thr376. A Mg(2+)-binding site is contributed by Asp375.

This sequence belongs to the phosphoglycerate kinase family. In terms of assembly, monomer. Mg(2+) is required as a cofactor. As to expression, mainly found in round spermatids. Localized on the principle piece in the sperm (at protein level). Testis-specific. Expression significantly decreased in the testis of elderly men.

The protein resides in the cytoplasm. The enzyme catalyses (2R)-3-phosphoglycerate + ATP = (2R)-3-phospho-glyceroyl phosphate + ADP. It participates in carbohydrate degradation; glycolysis; pyruvate from D-glyceraldehyde 3-phosphate: step 2/5. Functionally, essential for sperm motility and male fertility. Not required for the completion of spermatogenesis. This Homo sapiens (Human) protein is Phosphoglycerate kinase 2 (PGK2).